Here is a 195-residue protein sequence, read N- to C-terminus: N-terminal acetyltransferase B complex catalytic subunit NAT3 (195 aa).

In terms of domain architecture, N-acetyltransferase spans 2-172 (TTIQPFEPVD…DAFDMRKAMA (171 aa)).

It belongs to the acetyltransferase family. GNAT subfamily. As to quaternary structure, component of the N-terminal acetyltransferase B (NatB) complex, which is composed of NAT3 and MDM20.

It localises to the cytoplasm. It carries out the reaction N-terminal L-methionyl-L-asparaginyl-[protein] + acetyl-CoA = N-terminal N(alpha)-acetyl-L-methionyl-L-asparaginyl-[protein] + CoA + H(+). It catalyses the reaction N-terminal L-methionyl-L-glutaminyl-[protein] + acetyl-CoA = N-terminal N(alpha)-acetyl-L-methionyl-L-glutaminyl-[protein] + CoA + H(+). The catalysed reaction is N-terminal L-methionyl-L-aspartyl-[protein] + acetyl-CoA = N-terminal N(alpha)-acetyl-L-methionyl-L-aspartyl-[protein] + CoA + H(+). The enzyme catalyses N-terminal L-methionyl-L-glutamyl-[protein] + acetyl-CoA = N-terminal N(alpha)-acetyl-L-methionyl-L-glutamyl-[protein] + CoA + H(+). Catalytic subunit of the NatB N-terminal acetyltransferase, which catalyzes acetylation of the amino-terminal methionine residues of all proteins beginning with Met-Asp or Met-Glu and of some proteins beginning with Met-Asn, Met-Gln or Met-Met. NatB acetylates TPM1 protein and regulates tropomyocin-actin interactions, it is presumed to N-acetylate 15% of all yeast proteins. In Saccharomyces cerevisiae (strain ATCC 204508 / S288c) (Baker's yeast), this protein is N-terminal acetyltransferase B complex catalytic subunit NAT3.